The chain runs to 160 residues: uncharacterized protein (160 aa).

An N-acetyltransferase domain is found at Ile5–Leu160.

This is an uncharacterized protein from Bacillus subtilis (strain 168).